Consider the following 147-residue polypeptide: Large ribosomal subunit protein bL9 (147 aa).

The protein belongs to the bacterial ribosomal protein bL9 family.

Binds to the 23S rRNA. The chain is Large ribosomal subunit protein bL9 from Mycoplasmoides gallisepticum (strain R(low / passage 15 / clone 2)) (Mycoplasma gallisepticum).